Here is a 377-residue protein sequence, read N- to C-terminus: Alanine racemase (377 aa).

Catalysis depends on K37, which acts as the Proton acceptor; specific for D-alanine. The residue at position 37 (K37) is an N6-(pyridoxal phosphate)lysine. R135 is a binding site for substrate. Y271 serves as the catalytic Proton acceptor; specific for L-alanine. Substrate is bound at residue M319.

It belongs to the alanine racemase family. Pyridoxal 5'-phosphate is required as a cofactor.

The catalysed reaction is L-alanine = D-alanine. It participates in amino-acid biosynthesis; D-alanine biosynthesis; D-alanine from L-alanine: step 1/1. Its function is as follows. Catalyzes the interconversion of L-alanine and D-alanine. May also act on other amino acids. The protein is Alanine racemase (alr) of Helicobacter pylori (strain J99 / ATCC 700824) (Campylobacter pylori J99).